The following is a 327-amino-acid chain: Glycerol-3-phosphate dehydrogenase [NAD(P)+] (327 aa).

W15, R35, and K109 together coordinate NADPH. 3 residues coordinate sn-glycerol 3-phosphate: K109, G137, and S139. A141 lines the NADPH pocket. Sn-glycerol 3-phosphate is bound by residues K192, D245, S255, R256, and N257. Catalysis depends on K192, which acts as the Proton acceptor. NADPH is bound at residue R256. 2 residues coordinate NADPH: L275 and E277.

This sequence belongs to the NAD-dependent glycerol-3-phosphate dehydrogenase family.

It localises to the cytoplasm. The enzyme catalyses sn-glycerol 3-phosphate + NAD(+) = dihydroxyacetone phosphate + NADH + H(+). The catalysed reaction is sn-glycerol 3-phosphate + NADP(+) = dihydroxyacetone phosphate + NADPH + H(+). It functions in the pathway membrane lipid metabolism; glycerophospholipid metabolism. Its function is as follows. Catalyzes the reduction of the glycolytic intermediate dihydroxyacetone phosphate (DHAP) to sn-glycerol 3-phosphate (G3P), the key precursor for phospholipid synthesis. The polypeptide is Glycerol-3-phosphate dehydrogenase [NAD(P)+] (Chelativorans sp. (strain BNC1)).